We begin with the raw amino-acid sequence, 757 residues long: Xaa-Pro dipeptidyl-peptidase (757 aa).

Catalysis depends on charge relay system residues serine 348, aspartate 468, and histidine 498.

Belongs to the peptidase S15 family. Homodimer.

The protein localises to the cytoplasm. It catalyses the reaction Hydrolyzes Xaa-Pro-|- bonds to release unblocked, N-terminal dipeptides from substrates including Ala-Pro-|-p-nitroanilide and (sequentially) Tyr-Pro-|-Phe-Pro-|-Gly-Pro-|-Ile.. Removes N-terminal dipeptides sequentially from polypeptides having unsubstituted N-termini provided that the penultimate residue is proline. The polypeptide is Xaa-Pro dipeptidyl-peptidase (Streptococcus pneumoniae serotype 19F (strain G54)).